Here is a 277-residue protein sequence, read N- to C-terminus: Large ribosomal subunit protein uL2 (277 aa).

A disordered region spans residues 212-277 (RWRGKRPHVR…KFIVRGRKSK (66 aa)). Basic residues predominate over residues 254-277 (TAGKKTRDKKKASTKFIVRGRKSK).

It belongs to the universal ribosomal protein uL2 family. As to quaternary structure, part of the 50S ribosomal subunit. Forms a bridge to the 30S subunit in the 70S ribosome.

Functionally, one of the primary rRNA binding proteins. Required for association of the 30S and 50S subunits to form the 70S ribosome, for tRNA binding and peptide bond formation. It has been suggested to have peptidyltransferase activity; this is somewhat controversial. Makes several contacts with the 16S rRNA in the 70S ribosome. This is Large ribosomal subunit protein uL2 from Leuconostoc mesenteroides subsp. mesenteroides (strain ATCC 8293 / DSM 20343 / BCRC 11652 / CCM 1803 / JCM 6124 / NCDO 523 / NBRC 100496 / NCIMB 8023 / NCTC 12954 / NRRL B-1118 / 37Y).